Reading from the N-terminus, the 184-residue chain is Elongation factor P (184 aa).

This sequence belongs to the elongation factor P family.

It is found in the cytoplasm. Its pathway is protein biosynthesis; polypeptide chain elongation. Involved in peptide bond synthesis. Stimulates efficient translation and peptide-bond synthesis on native or reconstituted 70S ribosomes in vitro. Probably functions indirectly by altering the affinity of the ribosome for aminoacyl-tRNA, thus increasing their reactivity as acceptors for peptidyl transferase. This chain is Elongation factor P, found in Delftia acidovorans (strain DSM 14801 / SPH-1).